We begin with the raw amino-acid sequence, 166 residues long: MSEAIIAKKAEQVDLVAEKMKAAASIVVVDSRGLTVGQDTELRRSLRESGVEFKVIKNSILSRAAEQAGLGDMKDLFVGPSAVAFSNEDVVAPAKIINDFAKTADALEIKGGAIEGAASSKEDIQALASLPNREGMLSMLLSVLQAPVRNVAYAVKAVAESKEDVA.

This sequence belongs to the universal ribosomal protein uL10 family. Part of the ribosomal stalk of the 50S ribosomal subunit. The N-terminus interacts with L11 and the large rRNA to form the base of the stalk. The C-terminus forms an elongated spine to which L12 dimers bind in a sequential fashion forming a multimeric L10(L12)X complex.

In terms of biological role, forms part of the ribosomal stalk, playing a central role in the interaction of the ribosome with GTP-bound translation factors. This is Large ribosomal subunit protein uL10 from Streptococcus uberis (strain ATCC BAA-854 / 0140J).